The chain runs to 473 residues: Gamma-aminobutyric acid receptor subunit beta-3 (473 aa).

Residues 1–25 (MWGLAGGRLFGIFSAPVLVAVVCCA) form the signal peptide. The Extracellular segment spans residues 26–246 (QSVNDPGNMS…FRLKRNIGYF (221 aa)). N-linked (GlcNAc...) asparagine glycans are attached at residues N33 and N105. 120–122 (DTY) provides a ligand contact to benzamidine. Y122 is a binding site for 4-aminobutanoate. Y122 lines the histamine pocket. C161 and C175 are disulfide-bonded. N174 carries an N-linked (GlcNAc...) asparagine glycan. 4-aminobutanoate is bound by residues E180 and Y182. Residues 180–182 (ESY) and F225 contribute to the benzamidine site. 181-182 (SY) lines the histamine pocket. T227 serves as a coordination point for 4-aminobutanoate. Residue T227 participates in histamine binding. Residues 247–267 (ILQTYMPSILITILSWVSFWI) traverse the membrane as a helical segment. Over 268–271 (NYDA) the chain is Cytoplasmic. The helical transmembrane segment at 272 to 292 (SAARVALGITTVLTMTTINTH) threads the bilayer. Residues 293-304 (LRETLPKIPYVK) lie on the Extracellular side of the membrane. Residues 305–328 (AIDMYLMGCFVFVFLALLEYAFVN) form a helical membrane-spanning segment. Topologically, residues 329-447 (YIFFGRGPQR…KIPDLTDVNA (119 aa)) are cytoplasmic. The chain crosses the membrane as a helical span at residues 448-470 (IDRWSRIVFPFTFSLFNLVYWLY). The Extracellular portion of the chain corresponds to 471-473 (YVN).

This sequence belongs to the ligand-gated ion channel (TC 1.A.9) family. Gamma-aminobutyric acid receptor (TC 1.A.9.5) subfamily. GABRB3 sub-subfamily. In terms of assembly, heteropentamer, formed by a combination of alpha (GABRA1-6), beta (GABRB1-3), gamma (GABRG1-3), delta (GABRD), epsilon (GABRE), rho (GABRR1-3), pi (GABRP) and theta (GABRQ) chains, each subunit exhibiting distinct physiological and pharmacological properties. Can form functional homopentamers (in vitro). Interacts with UBQLN1. May interact with KIF21B. Identified in a complex of 720 kDa composed of LHFPL4, NLGN2, GABRA1, GABRB2, GABRG2 and GABRB3. Interacts with LHFPL4. Interacts with GIT1; this interaction is required for synaptic GABRB3 surface stability and inhibitory synapse strength.

It localises to the postsynaptic cell membrane. It is found in the cell membrane. The protein localises to the cytoplasmic vesicle membrane. It carries out the reaction chloride(in) = chloride(out). Potentiated by histamine. Its function is as follows. Beta subunit of the heteropentameric ligand-gated chloride channel gated by gamma-aminobutyric acid (GABA), a major inhibitory neurotransmitter in the brain. GABA-gated chloride channels, also named GABA(A) receptors (GABAAR), consist of five subunits arranged around a central pore and contain GABA active binding site(s) located at the alpha and beta subunit interface(s). GABAARs containing beta-3/GABRB3 subunit are found at both synaptic and extrasynaptic sites. When activated by GABA, GABAARs selectively allow the flow of chloride anions across the cell membrane down their electrochemical gradient. Chloride influx into the postsynaptic neuron following GABAAR opening decreases the neuron ability to generate a new action potential, thereby reducing nerve transmission. GABAARs containing alpha-1 and beta-3 subunits exhibit synaptogenic activity; the gamma-2 subunit being necessary but not sufficient to induce rapid synaptic contacts formation. Extrasynaptic beta-3 receptors contribute to the tonic GABAergic inhibition. GABAARs containing alpha-1, beta-3 and epsilon subunits may also permit spontaneous chloride channel activity while preserving the structural information required for GABA-gated openings. Beta-containing GABAARs can simultaneously bind GABA and histamine where histamine binds at the interface of two neighboring beta subunits, which may be involved in the regulation of sleep and wakefulness. Plays an important role in somatosensation and in the production of antinociception. The sequence is that of Gamma-aminobutyric acid receptor subunit beta-3 from Homo sapiens (Human).